We begin with the raw amino-acid sequence, 323 residues long: o-succinylbenzoate synthase (323 aa).

K134 functions as the Proton donor in the catalytic mechanism. Mg(2+) contacts are provided by D162, E191, and D214. The active-site Proton acceptor is the K236.

This sequence belongs to the mandelate racemase/muconate lactonizing enzyme family. MenC type 1 subfamily. The cofactor is a divalent metal cation.

It carries out the reaction (1R,6R)-6-hydroxy-2-succinyl-cyclohexa-2,4-diene-1-carboxylate = 2-succinylbenzoate + H2O. It functions in the pathway quinol/quinone metabolism; 1,4-dihydroxy-2-naphthoate biosynthesis; 1,4-dihydroxy-2-naphthoate from chorismate: step 4/7. It participates in quinol/quinone metabolism; menaquinone biosynthesis. Functionally, converts 2-succinyl-6-hydroxy-2,4-cyclohexadiene-1-carboxylate (SHCHC) to 2-succinylbenzoate (OSB). The sequence is that of o-succinylbenzoate synthase from Yersinia pestis bv. Antiqua (strain Antiqua).